Reading from the N-terminus, the 72-residue chain is Large ribosomal subunit protein bL28 (72 aa).

This sequence belongs to the bacterial ribosomal protein bL28 family.

In Chlorobium chlorochromatii (strain CaD3), this protein is Large ribosomal subunit protein bL28.